The sequence spans 456 residues: Maturase-like protein 1 (456 aa).

It to group II intron maturases.

The protein resides in the plastid. Could be required for group III intron excision. This chain is Maturase-like protein 1 (mat1), found in Euglena longa (Euglenophycean alga).